The following is a 143-amino-acid chain: MAPKKKVTGLIKLQIQAGAANPAPPIGPALGQHGVNIMEFCKAYNAATESQRGNVIPVEITVYEDRSFTFITKTPPAAELIKKAAGVAKGSATPHTVKVAKLTQAQVEEIASTKMEDLNANDIKAAALIIAGTARSMGITVEG.

This sequence belongs to the universal ribosomal protein uL11 family. In terms of assembly, part of the ribosomal stalk of the 50S ribosomal subunit. Interacts with L10 and the large rRNA to form the base of the stalk. L10 forms an elongated spine to which L12 dimers bind in a sequential fashion forming a multimeric L10(L12)X complex. Post-translationally, one or more lysine residues are methylated.

In terms of biological role, forms part of the ribosomal stalk which helps the ribosome interact with GTP-bound translation factors. In Paenarthrobacter aurescens (strain TC1), this protein is Large ribosomal subunit protein uL11.